Consider the following 161-residue polypeptide: Nodulation protein N (161 aa).

Residues 9 to 133 (VPSRIGQELG…LVTTYEVTVE (125 aa)) enclose the MaoC-like domain.

It to the R.meliloti counterpart.

Its function is as follows. Involved in the production of the root hair deformation (HAD) factor specifically on medicago. The polypeptide is Nodulation protein N (nodN) (Rhizobium leguminosarum bv. viciae).